Reading from the N-terminus, the 456-residue chain is Bifunctional protein GlmU (456 aa).

Positions 1–228 are pyrophosphorylase; the sequence is MKLKAIILAA…YEDIMAVNSR (228 aa). UDP-N-acetyl-alpha-D-glucosamine is bound by residues 8 to 11, K22, Q72, 77 to 78, 99 to 101, G138, E153, N168, and N226; these read LAAG, GT, and YGD. D101 is a binding site for Mg(2+). Position 226 (N226) interacts with Mg(2+). A linker region spans residues 229 to 249; sequence EQLAEVEEVMQRRIVKKHMEA. The segment at 250-456 is N-acetyltransferase; it reads GVTFIDPQST…WVARKGVGKK (207 aa). Positions 331 and 349 each coordinate UDP-N-acetyl-alpha-D-glucosamine. H361 functions as the Proton acceptor in the catalytic mechanism. Positions 364 and 375 each coordinate UDP-N-acetyl-alpha-D-glucosamine. Residues 384 to 385, S403, S421, and R438 contribute to the acetyl-CoA site; that span reads NY.

The protein in the N-terminal section; belongs to the N-acetylglucosamine-1-phosphate uridyltransferase family. It in the C-terminal section; belongs to the transferase hexapeptide repeat family. Homotrimer. Mg(2+) is required as a cofactor.

Its subcellular location is the cytoplasm. The enzyme catalyses alpha-D-glucosamine 1-phosphate + acetyl-CoA = N-acetyl-alpha-D-glucosamine 1-phosphate + CoA + H(+). It carries out the reaction N-acetyl-alpha-D-glucosamine 1-phosphate + UTP + H(+) = UDP-N-acetyl-alpha-D-glucosamine + diphosphate. It participates in nucleotide-sugar biosynthesis; UDP-N-acetyl-alpha-D-glucosamine biosynthesis; N-acetyl-alpha-D-glucosamine 1-phosphate from alpha-D-glucosamine 6-phosphate (route II): step 2/2. Its pathway is nucleotide-sugar biosynthesis; UDP-N-acetyl-alpha-D-glucosamine biosynthesis; UDP-N-acetyl-alpha-D-glucosamine from N-acetyl-alpha-D-glucosamine 1-phosphate: step 1/1. It functions in the pathway bacterial outer membrane biogenesis; LPS lipid A biosynthesis. Functionally, catalyzes the last two sequential reactions in the de novo biosynthetic pathway for UDP-N-acetylglucosamine (UDP-GlcNAc). The C-terminal domain catalyzes the transfer of acetyl group from acetyl coenzyme A to glucosamine-1-phosphate (GlcN-1-P) to produce N-acetylglucosamine-1-phosphate (GlcNAc-1-P), which is converted into UDP-GlcNAc by the transfer of uridine 5-monophosphate (from uridine 5-triphosphate), a reaction catalyzed by the N-terminal domain. This chain is Bifunctional protein GlmU, found in Alkaliphilus metalliredigens (strain QYMF).